We begin with the raw amino-acid sequence, 172 residues long: MERAEKREFVTELNEVFKASGSVVVAHYAGVTVAQMNDFRSKMRAAGGTVRVAKNRLAKIALQGTESEGMTDLFKGQTLIAFSEDPVTAPKVVMDFAKTNDKLVVLGGAMGATTLNAEGVKSLATLPSLDELRAKLLGLINAPATRVATVVAAPASQLARVFSAYAKKDEAA.

This sequence belongs to the universal ribosomal protein uL10 family. Part of the ribosomal stalk of the 50S ribosomal subunit. The N-terminus interacts with L11 and the large rRNA to form the base of the stalk. The C-terminus forms an elongated spine to which L12 dimers bind in a sequential fashion forming a multimeric L10(L12)X complex.

Forms part of the ribosomal stalk, playing a central role in the interaction of the ribosome with GTP-bound translation factors. The polypeptide is Large ribosomal subunit protein uL10 (Rhizobium meliloti (strain 1021) (Ensifer meliloti)).